The primary structure comprises 214 residues: Coiled-coil domain-containing protein 169 (214 aa).

Residues Glu30 to Lys144 adopt a coiled-coil conformation. The tract at residues Val161 to His214 is disordered. Positions Ala165 to Ala182 are enriched in basic and acidic residues. Residues Ala191 to Gly202 are compositionally biased toward basic residues.

The protein belongs to the CCDC169 family.

The sequence is that of Coiled-coil domain-containing protein 169 (ccdc169) from Xenopus laevis (African clawed frog).